The sequence spans 437 residues: Triacylglycerol lipase (437 aa).

Positions 1-100 (MVSYVVALPE…AELANASLLQ (100 aa)) constitute a PE domain. The interval 101-206 (SEFASGIGNG…GNSPPPLLNS (106 aa)) is linker. Residues 207-437 (LLGQTVQYTT…QINQQLGIAA (231 aa)) form a lipase region. The Involved in the stabilization of the negatively charged intermediate by the formation of the oxyanion hole signature appears at 239–241 (HGG). Residues Ser-309, Asp-383, and His-413 contribute to the active site.

The protein in the N-terminal section; belongs to the mycobacterial PE family. PGRS subfamily. It in the C-terminal section; belongs to the 'GDXG' lipolytic enzyme family. In terms of assembly, forms aggregates via its PE domain. Upon export, the PE domain is removed by proteolytic cleavage. Cleavage occurs at the cell surface and is not required for secretion. Cleaved after Gly-149 by the aspartic protease PecA. May also be cleaved before Leu-98 and after Ala-136.

The protein localises to the cytoplasm. Its subcellular location is the secreted. It is found in the cell wall. It localises to the cell surface. It catalyses the reaction a triacylglycerol + H2O = a diacylglycerol + a fatty acid + H(+). The enzyme catalyses 1,2,3-tri-(9Z-octadecenoyl)-glycerol + H2O = di-(9Z)-octadecenoylglycerol + (9Z)-octadecenoate + H(+). It carries out the reaction an acetyl ester + H2O = an aliphatic alcohol + acetate + H(+). The catalysed reaction is a butanoate ester + H2O = an aliphatic alcohol + butanoate + H(+). It catalyses the reaction a hexanoate ester + H2O = an aliphatic alcohol + hexanoate + H(+). The enzyme catalyses an octanoate ester + H2O = an aliphatic alcohol + octanoate + H(+). It carries out the reaction a dodecanoate ester + H2O = an aliphatic alcohol + dodecanoate + H(+). The catalysed reaction is a tetradecanoate ester + H2O = an aliphatic alcohol + tetradecanoate + H(+). It catalyses the reaction hexadecanoate ester + H2O = an aliphatic alcohol + hexadecanoate + H(+). The enzyme catalyses octadecanoate ester + H2O = an aliphatic alcohol + octadecanoate + H(+). It carries out the reaction 1-butyrylglycerol + H2O = butanoate + glycerol + H(+). The catalysed reaction is 1,2,3-tributanoylglycerol + H2O = dibutanoylglycerol + butanoate + H(+). With respect to regulation, PE domain down-regulates lipase activity. Cleavage by PecA does not affect surface localization and lipase activity. Its activity is regulated as follows. Inhibited by diethyl-p-nitrophenyl phosphate (E-600) at 0.5 uM, by phenylmethanesulfonyl fluoride at 5 mM and by polyethylene glycol sorbitan monolaurate (Tween 20). Also inhibited by CaCl(2), CoCl(2), MnCl(2), ZnCl(2) and MgCl(2). Inhibited by several hydrazides compounds. Stimulated slightly by SDS at concentrations up to 2 mM, above which the activity is severely inhibited. Its function is as follows. Catalyzes the hydrolysis of both intracellular and extracellular triacylglycerol (TAG). In vitro, can also hydrolyze p-nitrophenyl (pNP) esters with various chain lengths, including pNP-acetate (C2), pNP-butyrate (C4), pNP-caproate (C6), pNP-caprylate (C8), pNP-laurate (C12), pNP-myristate (C14), pNP-palmitate (C16) and pNP-stearate (C18). Also hydrolyzes monobutyrin, tributyrin and trioctanoin. Overexpression results in increase of virulence characterized by reduced survival of infected mouse and increased burden of bacilli in the lungs. Hydrolyzes internal or host-derived TAG depending on its localization. Functionally, hydrolyzes TAG that accumulates within mycobacterial intracytosolic lipid inclusions (ILI). Probably responsible for the utilization of stored long-chain TAG during the dormancy and reactivation stages of the pathogen. In terms of biological role, hydrolyzes host-derived TAG. The chain is Triacylglycerol lipase from Mycobacterium tuberculosis (strain ATCC 25618 / H37Rv).